Consider the following 96-residue polypeptide: Small ribosomal subunit protein bS6 (96 aa).

Belongs to the bacterial ribosomal protein bS6 family.

Binds together with bS18 to 16S ribosomal RNA. The polypeptide is Small ribosomal subunit protein bS6 (Cutibacterium acnes (strain DSM 16379 / KPA171202) (Propionibacterium acnes)).